Reading from the N-terminus, the 303-residue chain is ATP synthase gamma chain (303 aa).

It belongs to the ATPase gamma chain family. In terms of assembly, F-type ATPases have 2 components, CF(1) - the catalytic core - and CF(0) - the membrane proton channel. CF(1) has five subunits: alpha(3), beta(3), gamma(1), delta(1), epsilon(1). CF(0) has three main subunits: a, b and c.

It localises to the cell inner membrane. Produces ATP from ADP in the presence of a proton gradient across the membrane. The gamma chain is believed to be important in regulating ATPase activity and the flow of protons through the CF(0) complex. The protein is ATP synthase gamma chain of Bartonella henselae (strain ATCC 49882 / DSM 28221 / CCUG 30454 / Houston 1) (Rochalimaea henselae).